The sequence spans 948 residues: Puromycin-sensitive aminopeptidase (948 aa).

Residues Glu206 and 341–345 (GAMEN) each bind substrate. His377 contributes to the Zn(2+) binding site. Residue Glu378 is the Proton acceptor of the active site. Zn(2+) contacts are provided by His381 and Glu400.

Belongs to the peptidase M1 family. Requires Zn(2+) as cofactor. Expressed mainly in intestinal cells in the posterior part of the intestine and in amphid sensory neurons and nerve ring neurons. Expressed in neurons in the male tail. Expressed in mature spermatids (at protein level).

It is found in the cytoplasm. The protein localises to the cell cortex. It localises to the chromosome. The protein resides in the cytoskeleton. Its subcellular location is the spindle pole. The catalysed reaction is Release of an N-terminal amino acid, preferentially alanine, from a wide range of peptides, amides and arylamides.. Inhibited by chelating agent 1,10-phenanthroline, aminopeptidase inhibitors actinonin, amastatin, and leuhistin, and to a lesser extent by puromycin. In terms of biological role, aminopeptidase. Required for the exit from meiosis, probably upstream of cyclin cyb-3. Involved in the establishment of the anterior-posterior polarity at the embryonic 1-cell stage by regulating the dynamics of sperm-donated centrosomes. Plays a role in oocyte maturation. Required for embryonic development. The protein is Puromycin-sensitive aminopeptidase of Caenorhabditis elegans.